The chain runs to 519 residues: 3-octaprenyl-4-hydroxybenzoate carboxy-lyase (519 aa).

Asparagine 177 is a Mn(2+) binding site. Prenylated FMN-binding positions include 180-182 (IYR), 194-196 (RWL), and 199-200 (RG). Position 243 (glutamate 243) interacts with Mn(2+). Residue aspartate 318 is the Proton donor of the active site.

This sequence belongs to the UbiD family. Homohexamer. It depends on prenylated FMN as a cofactor. The cofactor is Mn(2+).

The protein localises to the cell membrane. The catalysed reaction is a 4-hydroxy-3-(all-trans-polyprenyl)benzoate + H(+) = a 2-(all-trans-polyprenyl)phenol + CO2. It participates in cofactor biosynthesis; ubiquinone biosynthesis. Catalyzes the decarboxylation of 3-octaprenyl-4-hydroxy benzoate to 2-octaprenylphenol, an intermediate step in ubiquinone biosynthesis. In Burkholderia mallei (strain ATCC 23344), this protein is 3-octaprenyl-4-hydroxybenzoate carboxy-lyase.